The chain runs to 318 residues: UAP56-interacting factor (318 aa).

M1 carries the post-translational modification N-acetylmethionine. Positions 1–25 are disordered; that stretch reads MNRFGTRLVGATATSSPPPKARSNE. A Phosphothreonine modification is found at T14. Phosphoserine is present on residues S16 and S23. A UAP56-binding motif motif is present at residues 26 to 44; that stretch reads NLDKIDMSLDDIIKLNRKE. The residue at position 61 (S61) is a Phosphoserine. The disordered stretch occupies residues 79–100; it reads GFGKTSLNRRGRVMPGKRRPNG. The segment covering 85-98 has biased composition (basic residues); the sequence is LNRRGRVMPGKRRP. The residue at position 118 (S118) is a Phosphoserine. K140 participates in a covalent cross-link: Glycyl lysine isopeptide (Lys-Gly) (interchain with G-Cter in SUMO1). A Glycyl lysine isopeptide (Lys-Gly) (interchain with G-Cter in SUMO2) cross-link involves residue K261.

Belongs to the UIF family. Interacts with CHTOP. Interacts with DDX39B/UAP56 and NXF1; interaction with DDX39B/UAP56 and NXF1 are mutually exclusive. Interacts with SSRP1; required for its recruitment to mRNAs. As to expression, expressed in a wide variety of cancer types.

It localises to the nucleus. The protein localises to the nucleoplasm. It is found in the nucleus speckle. Required for mRNA export from the nucleus to the cytoplasm. Acts as an adapter that uses the DDX39B/UAP56-NFX1 pathway to ensure efficient mRNA export and delivering to the nuclear pore. Associates with spliced and unspliced mRNAs simultaneously with ALYREF/THOC4. This Homo sapiens (Human) protein is UAP56-interacting factor (FYTTD1).